Consider the following 103-residue polypeptide: MRQRLLPSVTSLLLVALLFPGSSQARHVNHSATEALGELRERAPGQGTNGFQLLRHAVKRDLLPPRTPPYQVHISHREARGPSFRICVDFLGPRWARGCSTGN.

The N-terminal stretch at 1–25 (MRQRLLPSVTSLLLVALLFPGSSQA) is a signal peptide. Asn29 carries N-linked (GlcNAc...) asparagine glycosylation.

The protein belongs to the SPAG11 family. In terms of tissue distribution, specifically expressed in caput and proximal corpus of epididymis (at protein level). Present in the epididymal epithelium and on the sperm surface, with a subacrosomal equatorial distribution on the sperm head (at protein level).

Its subcellular location is the secreted. Functionally, has antimicrobial activity against E.coli. Plays a role in the defense response in the male reproductive tract, contributing to sperm maturation, storage and protection. The polypeptide is Sperm-associated antigen 11B (Homo sapiens (Human)).